The primary structure comprises 95 residues: Cliotide T5 (95 aa).

The segment at residues G1–N30 is a cross-link (cyclopeptide (Gly-Asn)). 3 disulfides stabilise this stretch: C4–C20, C8–C22, and C13–C27. Residues H31 to N95 constitute a propeptide, removed in mature form.

In terms of processing, contains 3 disulfide bonds. This is a cyclic peptide. Expressed in stem, shoot, root, leaf, pod and nodule but not in flower and seed (at protein level).

Its function is as follows. Probably participates in a plant defense mechanism. The chain is Cliotide T5 from Clitoria ternatea (Butterfly pea).